The primary structure comprises 119 residues: Ribonuclease P protein component (119 aa).

This sequence belongs to the RnpA family. In terms of assembly, consists of a catalytic RNA component (M1 or rnpB) and a protein subunit.

The enzyme catalyses Endonucleolytic cleavage of RNA, removing 5'-extranucleotides from tRNA precursor.. In terms of biological role, RNaseP catalyzes the removal of the 5'-leader sequence from pre-tRNA to produce the mature 5'-terminus. It can also cleave other RNA substrates such as 4.5S RNA. The protein component plays an auxiliary but essential role in vivo by binding to the 5'-leader sequence and broadening the substrate specificity of the ribozyme. This is Ribonuclease P protein component from Listeria monocytogenes serotype 4a (strain HCC23).